Reading from the N-terminus, the 706-residue chain is Axin-related protein (706 aa).

Residues 72–191 (SLNLLLDDQD…LQSDICKEYA (120 aa)) form the RGS domain. Disordered stretches follow at residues 278-298 (MTDG…REIH), 400-482 (TPAN…GTSA), and 585-605 (STTL…GFST). Residues 402–412 (ANLSPRSQSPF) show a composition bias toward polar residues. Over residues 453–462 (RSSVSSQLPR) the composition is skewed to low complexity. The region spanning 624–706 (GQGLAIVYYF…KIICKVERAC (83 aa)) is the DIX domain.

In terms of assembly, interacts with dvl2/dsh via DIX domains in both proteins. Forms a complex with ctnnb1/beta-catenin and gsk3b. Also forms heterodimers with mouse Axin1.

The protein localises to the cytoplasm. It is found in the cytoplasmic vesicle. In terms of biological role, regulates the wnt signaling pathway by interacting with dvl2/dsh, which displaces gsk3b from the axnr-gsk3b complex and thus prevents degradation of ctnnb1/beta-catenin. The sequence is that of Axin-related protein from Xenopus laevis (African clawed frog).